Consider the following 297-residue polypeptide: Mitochondrial ornithine transporter 1 (297 aa).

Solcar repeat units follow at residues 15–97 (GSPA…LKLT), 102–205 (DPTL…FKKN), and 212–292 (KPHF…FRET). 6 helical membrane-spanning segments follow: residues 18 to 38 (ASTF…GYPL), 72 to 91 (GLTL…FTVY), 107 to 127 (YFIS…PFEY), 184 to 204 (HLTR…TFKK), 215 to 235 (FAYA…VFPV), and 264 to 285 (IYRG…NFTL).

The protein belongs to the mitochondrial carrier (TC 2.A.29) family.

Its subcellular location is the mitochondrion inner membrane. Functionally, required for arginine biosynthesis. Transports ornithine synthesized from glutamate in the mitochondrial matrix to the cytosol, where it is converted to arginine. This is Mitochondrial ornithine transporter 1 from Schizosaccharomyces pombe (strain 972 / ATCC 24843) (Fission yeast).